We begin with the raw amino-acid sequence, 393 residues long: S-adenosylmethionine synthase 2 (393 aa).

A Mg(2+)-binding site is contributed by Glu9. Position 15 (His15) interacts with ATP. Glu43 is a binding site for K(+). Residues Glu56 and Gln99 each coordinate L-methionine. ATP is bound by residues 167–169 (DGK), 235–238 (SGRF), Asp246, 252–253 (RK), Ala269, Lys273, and Lys277. Position 246 (Asp246) interacts with L-methionine. L-methionine is bound at residue Lys277.

Belongs to the AdoMet synthase family. In terms of assembly, homotetramer. Interacts with GRF3. Requires Mn(2+) as cofactor. Mg(2+) serves as cofactor. It depends on Co(2+) as a cofactor. K(+) is required as a cofactor. Highly expressed in stems and roots. Detected in trichomes (at the protein level).

It is found in the cytoplasm. It catalyses the reaction L-methionine + ATP + H2O = S-adenosyl-L-methionine + phosphate + diphosphate. It functions in the pathway amino-acid biosynthesis; S-adenosyl-L-methionine biosynthesis; S-adenosyl-L-methionine from L-methionine: step 1/1. Its activity is regulated as follows. Inhibited by 5,5'-dithiobis-2-nitrobenzoic acid (DTNB) and N-ethylmaleimide (NEM) (in vitro). Its function is as follows. Catalyzes the formation of S-adenosylmethionine from methionine and ATP. The reaction comprises two steps that are both catalyzed by the same enzyme: formation of S-adenosylmethionine (AdoMet) and triphosphate, and subsequent hydrolysis of the triphosphate. The polypeptide is S-adenosylmethionine synthase 2 (SAM2) (Arabidopsis thaliana (Mouse-ear cress)).